Here is a 303-residue protein sequence, read N- to C-terminus: UPF0282 protein MM_2966 (303 aa).

It belongs to the UPF0282 family.

The protein is UPF0282 protein MM_2966 of Methanosarcina mazei (strain ATCC BAA-159 / DSM 3647 / Goe1 / Go1 / JCM 11833 / OCM 88) (Methanosarcina frisia).